A 161-amino-acid polypeptide reads, in one-letter code: Nucleotide-binding protein Pfl01_4421 (161 aa).

It belongs to the YajQ family.

Its function is as follows. Nucleotide-binding protein. This Pseudomonas fluorescens (strain Pf0-1) protein is Nucleotide-binding protein Pfl01_4421.